The primary structure comprises 79 residues: Cytochrome b (79 aa).

3 consecutive transmembrane segments (helical) span residues 1–7 (TALFLAM), 31–52 (WLIR…YLHI), and 67–79 (WNVG…LTMM). Residues His37 and His51 each coordinate heme b.

This sequence belongs to the cytochrome b family. As to quaternary structure, the cytochrome bc1 complex contains 3 respiratory subunits (MT-CYB, CYC1 and UQCRFS1), 2 core proteins (UQCRC1 and UQCRC2) and probably 6 low-molecular weight proteins. Heme b serves as cofactor.

The protein resides in the mitochondrion inner membrane. Its function is as follows. Component of the ubiquinol-cytochrome c reductase complex (complex III or cytochrome b-c1 complex) that is part of the mitochondrial respiratory chain. The b-c1 complex mediates electron transfer from ubiquinol to cytochrome c. Contributes to the generation of a proton gradient across the mitochondrial membrane that is then used for ATP synthesis. The sequence is that of Cytochrome b (mt-cyb) from Amphilophus citrinellus (Midas cichlid).